We begin with the raw amino-acid sequence, 414 residues long: Carboxyl-terminal-processing protease (414 aa).

A signal peptide spans 1–29 (MLRKRLQAGLCSLLLVLVLVFGPMERAIA). The PDZ domain occupies 100-184 (YRSLKVSTSG…STVSLTVKSP (85 aa)). Active-site charge relay system residues include Ser-310, Asp-321, and Lys-335.

Belongs to the peptidase S41A family.

It localises to the cellular thylakoid lumen. The enzyme catalyses The enzyme shows specific recognition of a C-terminal tripeptide, Xaa-Yaa-Zaa, in which Xaa is preferably Ala or Leu, Yaa is preferably Ala or Tyr, and Zaa is preferably Ala, but then cleaves at a variable distance from the C-terminus. A typical cleavage is -Ala-Ala-|-Arg-Ala-Ala-Lys-Glu-Asn-Tyr-Ala-Leu-Ala-Ala.. Cleavage of the 16 C-terminal residues from the D1 precursor of photosystem II (PSII). This proteolytic processing is necessary to allow the light-driven assembly of the oxygen-evolving cluster (a tetranuclear manganese), which is responsible for photosynthetic water oxidation. The protein is Carboxyl-terminal-processing protease (ctpA) of Picosynechococcus sp. (strain ATCC 27264 / PCC 7002 / PR-6) (Agmenellum quadruplicatum).